The following is a 137-amino-acid chain: Peptide methionine sulfoxide reductase MsrB (137 aa).

The tract at residues 1-33 (MSNNQDRPGQITDESLRERLSPEAYAVTRRAGT) is disordered. Positions 13-135 (DESLRERLSP…NSLSLDFKAA (123 aa)) constitute a MsrB domain. Zn(2+)-binding residues include Cys52, Cys55, Cys101, and Cys104. Cys124 acts as the Nucleophile in catalysis.

Belongs to the MsrB Met sulfoxide reductase family. Zn(2+) serves as cofactor.

It catalyses the reaction L-methionyl-[protein] + [thioredoxin]-disulfide + H2O = L-methionyl-(R)-S-oxide-[protein] + [thioredoxin]-dithiol. This chain is Peptide methionine sulfoxide reductase MsrB, found in Thioalkalivibrio sulfidiphilus (strain HL-EbGR7).